The following is a 128-amino-acid chain: Large ribosomal subunit protein bL17 (128 aa).

The protein belongs to the bacterial ribosomal protein bL17 family. Part of the 50S ribosomal subunit. Contacts protein L32.

This chain is Large ribosomal subunit protein bL17, found in Haemophilus influenzae (strain 86-028NP).